Reading from the N-terminus, the 331-residue chain is MATRNRTLLFRKYRNSLRSVRAPMGSSSSSTLTEHNSLTGAKSGLGPVIEMASTSLLNPNRSYAPVSTEDPGNSSRGTITVGLPPDWVDVSEEISVYIQRARTKMAELGKAHAKALMPSFGDGKEDQHQIETLTQEVTFLLKKSEKQLQRLSAAGPSEDSNVRKNVQRSLATDLQNLSMELRKKQSTYLKRLRLQKEDGADLEMNLNGSRYKAEDDDFDDMVFSEHQMSKIKKSEEISIEREKEIQQVVESVSELAQIMKDLSALVIDQGTIVDRIDYNIQNVASTVDDGLKQLQKAERTQRQGGMVMCASVLVILCFIMLVLLILKEILL.

Residues 1–305 (MATRNRTLLF…KAERTQRQGG (305 aa)) are Cytoplasmic-facing. Disordered regions lie at residues 20-45 (VRAP…KSGL) and 59-80 (PNRS…GTIT). Residues 31 to 40 (TLTEHNSLTG) show a composition bias toward polar residues. Residues 124–154 (KEDQHQIETLTQEVTFLLKKSEKQLQRLSAA) adopt a coiled-coil conformation. In terms of domain architecture, t-SNARE coiled-coil homology spans 235 to 297 (EEISIEREKE…DDGLKQLQKA (63 aa)). Residues 306–326 (MVMCASVLVILCFIMLVLLIL) traverse the membrane as a helical; Anchor for type IV membrane protein segment. Over 327 to 331 (KEILL) the chain is Vesicular.

It belongs to the syntaxin family. In terms of assembly, part of the t-SNARE complex. As to expression, expressed at low levels in roots, stems, flowers and leaves.

The protein resides in the golgi apparatus. The protein localises to the trans-Golgi network membrane. Contributes to the regulation of secretory and vacuolar transport pathways in the post-Golgi network, and to the maintenance of the Golgi apparatus and trans-Golgi network (TGN) morphologies. Vesicle trafficking protein that functions in the secretory pathway and mediates liposome fusion. Required for extracellular resistance responses to a fungal pathogen. Also involved in the protection of chloroplasts from salicylic acid-dependent biotic stress. The protein is Syntaxin-43 of Arabidopsis thaliana (Mouse-ear cress).